The chain runs to 312 residues: Probable hydrogen peroxide-inducible genes activator (312 aa).

The HTH lysR-type domain occupies 8-65; it reads PSLAQLRAFAAVAEHLHFRDAAAAIGMSQPALSGAVSALEESLGVTLLERTTRKVLLS. The H-T-H motif DNA-binding region spans 25-44; it reads FRDAAAAIGMSQPALSGAVS.

This sequence belongs to the LysR transcriptional regulatory family.

Functionally, required for the induction of a regulon of hydrogen peroxide inducible genes such as catalase and glutathione-reductase. This chain is Probable hydrogen peroxide-inducible genes activator (oxyR), found in Streptomyces viridosporus.